The following is a 270-amino-acid chain: Shikimate dehydrogenase (NADP(+)) (270 aa).

Shikimate-binding positions include 15 to 17 (SKS) and Thr-62. Residue Lys-66 is the Proton acceptor of the active site. Asn-87 and Asp-102 together coordinate shikimate. Residues 127–131 (GAGGA), 151–156 (NRTVAR), and Met-214 each bind NADP(+). Tyr-216 provides a ligand contact to shikimate. Gly-238 lines the NADP(+) pocket.

This sequence belongs to the shikimate dehydrogenase family. In terms of assembly, homodimer.

It carries out the reaction shikimate + NADP(+) = 3-dehydroshikimate + NADPH + H(+). It functions in the pathway metabolic intermediate biosynthesis; chorismate biosynthesis; chorismate from D-erythrose 4-phosphate and phosphoenolpyruvate: step 4/7. Functionally, involved in the biosynthesis of the chorismate, which leads to the biosynthesis of aromatic amino acids. Catalyzes the reversible NADPH linked reduction of 3-dehydroshikimate (DHSA) to yield shikimate (SA). The polypeptide is Shikimate dehydrogenase (NADP(+)) (Alkalilimnicola ehrlichii (strain ATCC BAA-1101 / DSM 17681 / MLHE-1)).